A 355-amino-acid chain; its full sequence is MFPIDIRPDKLTQEMLDYSRKLGQGMENLLNAEAIDTGVSPKQAVYSEDKLVLYRYDRPEGAPEAQPVPLLIVYALVNRPYMTDIQEDRSTIKGLLATGQDVYLIDWGYPDQADRALTLDDYINGYIDRCVDYLREAHGVDKVNLLGICQGGAFSLMYSALHPDKVRNLVTMVTPVDFKTPDNLLSAWVQNVDIDLAVDTMGNIPGELLNWTFLSLKPFSLTGQKYVNMVDLLDDPDKVKNFLRMEKWIFDSPDQAGETFRQFIKDFYQNNGFLNGGVVLGGQEVDLKDITCPVLNIFALQDHLVPPDASRALKGLTSSPDYTELAFPGGHIGIYVSGKAQKEVTPAIGKWLNER.

The AB hydrolase-1 domain maps to P69–I334. C149 is an active-site residue.

Belongs to the PHA/PHB synthase family. Type III PhaC subfamily. In terms of assembly, a large complex of PhaC and PhaE; the ratio of the subunits has been estimated to be from 1:1 to 4:1, with more PhaE than PhaC.

Its subcellular location is the cytoplasm. It carries out the reaction (3R)-3-hydroxybutanoyl-CoA + [(3R)-hydroxybutanoate](n) = [(3R)-hydroxybutanoate](n+1) + CoA. It participates in biopolymer metabolism; poly-(R)-3-hydroxybutanoate biosynthesis. Functionally, polymerizes D(-)-3-hydroxybutyryl-CoA to create polyhydroxybutyrate (PHB) which consists of thousands of hydroxybutyrate molecules linked end to end. This subunit has catalytic activity that is enhanced 100-fold by PhaE, the non-catalytic subunit. The chain is Poly(3-hydroxyalkanoate) polymerase subunit PhaC from Allochromatium vinosum (strain ATCC 17899 / DSM 180 / NBRC 103801 / NCIMB 10441 / D) (Chromatium vinosum).